Here is a 341-residue protein sequence, read N- to C-terminus: Phospholipid phosphatase homolog 1.2 homolog (341 aa).

Transmembrane regions (helical) follow at residues 30–50, 71–91, and 122–142; these read LFIFFLATAAVTVIVPTLLGV, ITAVQLMLYNLVLNAATVLFV, and LLTYFGYSQIGFVMNIALNIV. Asn-162 carries N-linked (GlcNAc...) asparagine glycosylation. Transmembrane regions (helical) follow at residues 223 to 243 and 257 to 277; these read RIVVPISQTLMFMIGLGISFS and VGIFIGIFLAVYTCTFWTDLF. 2 disordered regions span residues 284 to 308 and 322 to 341; these read SETQPLLLPRPPRTPRNSEDEERHR and FEATGPQDSDTILLPVPQSA. Over residues 299 to 308 the composition is skewed to basic and acidic residues; sequence RNSEDEERHR.

It belongs to the PA-phosphatase related phosphoesterase family.

The protein localises to the membrane. The chain is Phospholipid phosphatase homolog 1.2 homolog from Caenorhabditis elegans.